The primary structure comprises 1325 residues: MAEPESEPNATFELELFLPGRPLLPKDVKSLGLPETPPSLKVAVTQHETLNDLRITLNDSPEGYWLGAFRFRRPDSHTRKGELVNEWEELQEVFRHDAPHDRILQVSHEPYNETEVRLHIQRLRDLLSGTQSDPASVSVDAGATVHDAIVHANEWAHDAHMPAPPKPSWRGWPQDGTAQLLPALARYPRVLPKCVRGMALSAWNPPPKSWALRGHLLYLSIDTLEGDVLHITASVNGFFLNASSSQKFQPQPHPSKALHSSSLFDLLCAASPLFLQNFALLFNDPVSTRDYFSALPVMNSLPAAPWLAREPKHESDPMRTQTAFLLTGAMSADTLDGSRDWNEELQSSRELPRSSLAERLMRDRVLNRLYAEFTLAAARVVPRVAAGEVAPMNPADAPAAHMYLYNNLFVTRGTDSVDMYRFLGGDAAAHVAVGKDLQGVRRLGNLDIEGLSLLGTVVIDWLGERWVVQTVLPGLFRQVAADAAASQSDGSTASHVAYGGVEGPDTIHTDPAFHKVLSVAGKSLHVAEHKMRDAQGMEHELCLSVDCKGLRGTDGRMYLLDVSRHTPMDVTWLDHDMEGSVLEGTDTASYPHRLPLLRPELIDAYWDMHLHEFARDKLARQRASNEASSPSTATSSQVDVSDFSLNFHPDAFAEFRTGSGDDARVIQPATDESIPSIAAVRKVSEYLRKEVIVRLISDVAAGLTSAVDGIALTNRMHARGINMRYLGYIANLSQPSQRDHWDQSVVSKLGSGHEALVQAFRRVVIHEMVVRSAKHCLRTYLRALPLMEAAACIAHFANCFLGTEREPSPVPKMPEVIPASTASRSESHKPWMSLTPAKLVEELRIDIRKRFRFELPMFFLETELRKPQALRALCLKMGIQLAVRDYEFEPEAKHAEGQAAAPSSNATKEKTTTSSRSGLSKKGKRAFPPPPSKPLRTTTFVPEDVVCVCPLVKTSTPKSSLSEDAFEAGRISFVRGEREIGTELMLESIGFYEQVYGLVHPETGKCYSKFASFLHHYAAEFAIKAARKASADSNQGSSSDGDRIGTNDAGSADGSKTEHDDQLPEVVKEVFTLENALRFQRQAVTVSERTLGLDHPETMTQYMNLAMMEQSSANLDDALRYQERVMQLWQLLYGRDHPDVVHTLSSIALMLQMRQDYEPSLRAYEASHDLAVRLFGPNSIYTGNMAHELSQALILSGDLKAAIQVEKEAWRIFQERLGSEDPLTKESQALLSGLAATAVRAAKQQHARELVQTRMPSSARSTRSSAHHHHHRHLHQQQQNSSSSPHPIPALANRSIDDLVEYIQGTPGTGSSRAARKRAARAKRS.

Residues 311–573 (PKHESDPMRT…RHTPMDVTWL (263 aa)) enclose the Clu domain. Disordered regions lie at residues 893–937 (KHAE…PLRT), 1032–1063 (DSNQ…DDQL), and 1245–1325 (QHAR…AKRS). Over residues 1265-1275 (SAHHHHHRHLH) the composition is skewed to basic residues. The span at 1276-1285 (QQQQNSSSSP) shows a compositional bias: low complexity. The span at 1314–1325 (AARKRAARAKRS) shows a compositional bias: basic residues.

This sequence belongs to the CLU family. May associate with the eukaryotic translation initiation factor 3 (eIF-3) complex.

Its subcellular location is the cytoplasm. MRNA-binding protein involved in proper cytoplasmic distribution of mitochondria. The protein is Clustered mitochondria protein homolog of Malassezia globosa (strain ATCC MYA-4612 / CBS 7966) (Dandruff-associated fungus).